The chain runs to 210 residues: Na(+)-translocating NADH-quinone reductase subunit D (210 aa).

The next 6 membrane-spanning stretches (helical) occupy residues 14 to 34 (PIVN…ALAV), 42 to 62 (LVMA…ISMI), 72 to 92 (IIVQ…LLQA), 103 to 123 (VFVG…AYAM), 131 to 151 (FMDG…VGFV), and 178 to 198 (NGLL…IWII).

This sequence belongs to the NqrDE/RnfAE family. Composed of six subunits; NqrA, NqrB, NqrC, NqrD, NqrE and NqrF.

The protein localises to the cell inner membrane. The enzyme catalyses a ubiquinone + n Na(+)(in) + NADH + H(+) = a ubiquinol + n Na(+)(out) + NAD(+). Functionally, NQR complex catalyzes the reduction of ubiquinone-1 to ubiquinol by two successive reactions, coupled with the transport of Na(+) ions from the cytoplasm to the periplasm. NqrA to NqrE are probably involved in the second step, the conversion of ubisemiquinone to ubiquinol. The protein is Na(+)-translocating NADH-quinone reductase subunit D of Shewanella sp. (strain ANA-3).